The primary structure comprises 359 residues: Membrane-bound lytic murein transglycosylase C (359 aa).

Residues 1–16 (MKKYLALALIAPLLIS) form the signal peptide. Residue Cys-17 is the site of N-palmitoyl cysteine attachment. Cys-17 carries the S-diacylglycerol cysteine lipid modification.

It belongs to the transglycosylase Slt family.

Its subcellular location is the cell outer membrane. The catalysed reaction is Exolytic cleavage of the (1-&gt;4)-beta-glycosidic linkage between N-acetylmuramic acid (MurNAc) and N-acetylglucosamine (GlcNAc) residues in peptidoglycan, from either the reducing or the non-reducing ends of the peptidoglycan chains, with concomitant formation of a 1,6-anhydrobond in the MurNAc residue.. In terms of biological role, murein-degrading enzyme. May play a role in recycling of muropeptides during cell elongation and/or cell division. This chain is Membrane-bound lytic murein transglycosylase C, found in Escherichia coli O7:K1 (strain IAI39 / ExPEC).